Consider the following 91-residue polypeptide: Small ribosomal subunit protein uS15 (91 aa).

This sequence belongs to the universal ribosomal protein uS15 family. Part of the 30S ribosomal subunit. Forms a bridge to the 50S subunit in the 70S ribosome, contacting the 23S rRNA.

Its function is as follows. One of the primary rRNA binding proteins, it binds directly to 16S rRNA where it helps nucleate assembly of the platform of the 30S subunit by binding and bridging several RNA helices of the 16S rRNA. Forms an intersubunit bridge (bridge B4) with the 23S rRNA of the 50S subunit in the ribosome. This Sulfurimonas denitrificans (strain ATCC 33889 / DSM 1251) (Thiomicrospira denitrificans (strain ATCC 33889 / DSM 1251)) protein is Small ribosomal subunit protein uS15.